We begin with the raw amino-acid sequence, 553 residues long: MLSDIEIARSAKLEPVMNIAKNLSIPGDFLNSYGKFMAKISHSFLKNLNIRKGKLILVTAMTPTPAGEGKTTTSIGLSMALNKIGHRSIVTLREPSLGPVFGIKGGAAGGGYSQVLPMEDINLHFTGDIHAVGTAHNLISAVIDSHIRFGNDLDIDLTKITWPRAIDMNDRALRNIVIALGGHANGYPREDGFVITAASEIMAILCLSKDLQDLKNRVGNIVIGWSKNGKPVTVHELGIEGAIAVILKDAINPNLVQTIENTPAFIHGGPFANIAHGTNSIIATKMALGLSDYVVTESGFGSDLGAEKFFDFVSPAADLKPSVAVIVATVRAIKYHGGVPLKDLENENLEAIKKGIENLKIHIENVKKFNVPVVVALNRFATDTERELDLVVNTVEKLGTKISLNEAFAKGSEGAIDLAKKVIEVADESKFSPIYKWDSPVEEKIKILATEIYRAKDVSFSKEAITSLKQIEKAGLSNLPVIVAKTQYSISDDPSKLGAPDGYVFNVRNFKLSSGAGFIVAISGEIMLMPGLGKKPNAVNIDIDEKGNITGLF.

64-71 (TPAGEGKT) is an ATP binding site.

The protein belongs to the formate--tetrahydrofolate ligase family.

The catalysed reaction is (6S)-5,6,7,8-tetrahydrofolate + formate + ATP = (6R)-10-formyltetrahydrofolate + ADP + phosphate. Its pathway is one-carbon metabolism; tetrahydrofolate interconversion. This Pseudothermotoga lettingae (strain ATCC BAA-301 / DSM 14385 / NBRC 107922 / TMO) (Thermotoga lettingae) protein is Formate--tetrahydrofolate ligase.